The following is a 429-amino-acid chain: 3-phosphoshikimate 1-carboxyvinyltransferase (429 aa).

Lysine 23, serine 24, and arginine 28 together coordinate 3-phosphoshikimate. Residue lysine 23 coordinates phosphoenolpyruvate. Positions 94 and 126 each coordinate phosphoenolpyruvate. Positions 171, 172, 173, 199, 316, 339, and 343 each coordinate 3-phosphoshikimate. Glutamine 173 contributes to the phosphoenolpyruvate binding site. Aspartate 316 (proton acceptor) is an active-site residue. Phosphoenolpyruvate contacts are provided by arginine 347, arginine 389, and lysine 414.

Belongs to the EPSP synthase family. In terms of assembly, monomer.

The protein localises to the cytoplasm. It carries out the reaction 3-phosphoshikimate + phosphoenolpyruvate = 5-O-(1-carboxyvinyl)-3-phosphoshikimate + phosphate. It functions in the pathway metabolic intermediate biosynthesis; chorismate biosynthesis; chorismate from D-erythrose 4-phosphate and phosphoenolpyruvate: step 6/7. Its function is as follows. Catalyzes the transfer of the enolpyruvyl moiety of phosphoenolpyruvate (PEP) to the 5-hydroxyl of shikimate-3-phosphate (S3P) to produce enolpyruvyl shikimate-3-phosphate and inorganic phosphate. The protein is 3-phosphoshikimate 1-carboxyvinyltransferase of Idiomarina loihiensis (strain ATCC BAA-735 / DSM 15497 / L2-TR).